Here is a 2002-residue protein sequence, read N- to C-terminus: [F-actin]-monooxygenase MICAL3 (2002 aa).

Residues 2–494 (EERKHETMNP…RHLYDTGETK (493 aa)) are monooxygenase domain. Residues Cys97, 116 to 118 (EKR), 123 to 125 (RNN), Phe183, Tyr298, and Asp398 contribute to the FAD site. Residues 518 to 624 (VARSSKLLGW…YLTQFYEMFK (107 aa)) enclose the Calponin-homology (CH) domain. The residue at position 649 (Ser649) is a Phosphoserine. Residues 658–706 (GQTISRKRSPKDKKEKDLDGAGKRRKTSQSEEEEAPRGHRGERPTLVST) are disordered. Residues 663–684 (RKRSPKDKKEKDLDGAGKRRKT) carry the Nuclear localization signal motif. Residues 669–679 (DKKEKDLDGAG) show a composition bias toward basic and acidic residues. A phosphoserine mark is found at Ser685 and Ser687. The LIM zinc-binding domain maps to 762-824 (DTCYFCQKRV…KPHYCYRLSG (63 aa)). Zn(2+) contacts are provided by Cys764, Cys767, His785, Cys788, Cys791, Cys794, Cys814, and His817. Residues 835 to 883 (PLSGKEAKGPLQDGATTDANGRANAVASSTERTPGSGVNGLEEPSIAKR) are disordered. Thr887 carries the post-translational modification Phosphothreonine. Disordered stretches follow at residues 907-1313 (QEVP…SPLA), 1335-1776 (RRSL…GKHR), and 1791-1821 (LSFS…TYTE). Acidic residues predominate over residues 938 to 950 (SEMEEEGEEEEEE). Residue Ser977 is modified to Phosphoserine. Residues 991 to 1017 (NEEEEEEEEEYEEEEEEDYDEEEEESS) are compositionally biased toward acidic residues. A compositionally biased stretch (basic and acidic residues) spans 1041-1054 (HWTHIREREEEERM). The span at 1055–1066 (APASESSASGAP) shows a compositional bias: low complexity. Positions 1068–1102 (DENDLEEDVDSEPAEIEGEAAEDGDPGDTGAELDD) are enriched in acidic residues. Ser1134, Ser1143, Ser1160, and Ser1192 each carry phosphoserine. Residues 1150 to 1163 (GPSQATSPIRSPQE) are compositionally biased toward polar residues. Residues 1191-1218 (KSPEERLFPEPLLPKEKPKADAPSDLKA) show a composition bias toward basic and acidic residues. The segment covering 1239 to 1258 (PGSPQPQPPVAASTPPPSPL) has biased composition (pro residues). Composition is skewed to polar residues over residues 1268 to 1280 (TEAT…QSPI) and 1288 to 1302 (KTST…QSQS). Ser1274 carries the post-translational modification Phosphoserine. Thr1276 carries the phosphothreonine modification. At Ser1278 the chain carries Phosphoserine. Phosphoserine is present on residues Ser1310 and Ser1337. A Phosphothreonine modification is found at Thr1341. Residues Ser1371 and Ser1384 each carry the phosphoserine modification. Residues 1407–1422 (PSDRELRSAQEERREL) show a composition bias toward basic and acidic residues. The segment covering 1423–1435 (SSSSGLGLHGSSS) has biased composition (low complexity). Ser1433 bears the Phosphoserine mark. Residues 1436–1451 (NMKTLGSQSFNTSDSA) show a composition bias toward polar residues. Position 1454 is a phosphothreonine (Thr1454). Pro residues predominate over residues 1456 to 1467 (PSSPPPPPPPGE). Over residues 1516–1530 (SVEEIPFADDVEDTY) the composition is skewed to acidic residues. Positions 1588–1604 (EAKELAEERMRAREKSV) are enriched in basic and acidic residues. Phosphoserine is present on Ser1649. Phosphothreonine is present on Thr1651. Residues 1657–1668 (GSEEPTLKHEAT) are compositionally biased toward basic and acidic residues. The segment covering 1674–1694 (SPPSDSGGPDGSFTSSEGSSG) has biased composition (low complexity). Basic residues predominate over residues 1695–1713 (KSKKRSSLFSPRRNKKEKK). Phosphoserine is present on residues Ser1701 and Ser1704. Positions 1760–1769 (CPSTPSSGAT) are enriched in polar residues. Residues 1804–1820 (VLEKSSQKSRREPRTYT) are compositionally biased toward basic and acidic residues. Residues 1821–1992 (EEELNAKLTR…EEDKDLEAAM (172 aa)) are a coiled coil. One can recognise a bMERB domain in the interval 1841–1990 (KQEELKRLHR…EREEDKDLEA (150 aa)). At Ser1912 the chain carries Phosphoserine.

It belongs to the Mical family. Interacts with RAB1B, RAB8A, RAB10, RAB13 and RAB15 (in their GTP-bound forms); binding to RAB1B is of low affinity compared to other Rab proteins; at least in case of RAB8A can bind 2 molecules of RAB8A simultaneously through a high and a low affinity binding site, respectively. Interacts with ERC1 and RAB8A; may bridge ERC1 with RAB8A. Interacts with KIF23 and ERC1; enhances the interaction between KIF23 and ERC1. Interacts with NINL isoform 2. The cofactor is FAD. Ubiquitous.

It localises to the cytoplasm. The protein localises to the cell cortex. It is found in the cytoskeleton. The protein resides in the nucleus. Its subcellular location is the midbody. It localises to the spindle. The protein localises to the cilium basal body. The catalysed reaction is L-methionyl-[F-actin] + NADPH + O2 + H(+) = L-methionyl-(R)-S-oxide-[F-actin] + NADP(+) + H2O. Its function is as follows. Monooxygenase that promotes depolymerization of F-actin by mediating oxidation of specific methionine residues on actin to form methionine-sulfoxide, resulting in actin filament disassembly and preventing repolymerization. In the absence of actin, it also functions as a NADPH oxidase producing H(2)O(2). Seems to act as Rab effector protein and plays a role in vesicle trafficking. Involved in exocytic vesicles tethering and fusion: the monooxygenase activity is required for this process and implicates RAB8A associated with exocytotic vesicles. Required for cytokinesis. Contributes to stabilization and/or maturation of the intercellular bridge independently of its monooxygenase activity. Promotes recruitment of Rab8 and ERC1 to the intercellular bridge, and together these proteins are proposed to function in timely abscission. The sequence is that of [F-actin]-monooxygenase MICAL3 (MICAL3) from Homo sapiens (Human).